We begin with the raw amino-acid sequence, 60 residues long: Serum basic protease inhibitor (60 aa).

In terms of domain architecture, BPTI/Kunitz inhibitor spans 7 to 57 (CLEPPYTGPCKAAMIRYFYNAKAGFCETFVYGGCRAKSNNFKSAEDCMRTC). 3 cysteine pairs are disulfide-bonded: Cys7-Cys57, Cys16-Cys40, and Cys32-Cys53.

It is found in the secreted. In terms of biological role, this inhibitor has activity very similar to that of the basic protease inhibitor from bovine tissues. This is Serum basic protease inhibitor from Bos taurus (Bovine).